Reading from the N-terminus, the 283-residue chain is Heavy metal-associated isoprenylated plant protein 3 (283 aa).

Over residues 1–22 (MGEKKNEGDNKKKGGDNKKKNE) the composition is skewed to basic and acidic residues. A disordered region spans residues 1 to 26 (MGEKKNEGDNKKKGGDNKKKNETPSI). HMA domains are found at residues 25-88 (SITV…KKKV) and 132-195 (VTTA…KRAV). Positions 36 and 39 each coordinate Zn(2+). The segment covering 82-129 (EKTKKKVDLVSPQPKKEKEKENKNKNDEDKKKSEEKKKPDNNDKKPKE) has biased composition (basic and acidic residues). The interval 82 to 131 (EKTKKKVDLVSPQPKKEKEKENKNKNDEDKKKSEEKKKPDNNDKKPKETP) is disordered. Zn(2+) contacts are provided by Cys-143 and Cys-146. Residues 198-230 (VPPKKEKDKENGNENGEKKKGGGGDGGGKEKTG) show a composition bias toward basic and acidic residues. Residues 198–238 (VPPKKEKDKENGNENGEKKKGGGGDGGGKEKTGNKGGGEGV) are disordered. Residue Cys-280 is modified to Cysteine methyl ester. Cys-280 is lipidated: S-farnesyl cysteine. The propeptide at 281–283 (VVM) is removed in mature form.

It belongs to the HIPP family.

The protein localises to the nucleus. The protein resides in the nucleolus. It localises to the cytoplasm. Its function is as follows. Heavy-metal-binding protein. Binds high amounts of zinc. May act as an upstream regulator of the salicylate-dependent pathogen response. Involved in abiotic stress responses, and seed and flower development. The sequence is that of Heavy metal-associated isoprenylated plant protein 3 from Arabidopsis thaliana (Mouse-ear cress).